The primary structure comprises 122 residues: Autophagy-related protein 8a (122 aa).

The segment at 1–21 (MAKSSFKISNPLEARMSESSR) is disordered. A lipid anchor (Phosphatidylethanolamine amidated glycine) is attached at Gly117. Residues 118–122 (SLTVA) constitute a propeptide, removed in mature form.

The protein belongs to the ATG8 family. As to quaternary structure, interacts with ATG4B. Interacts with NBR1. Post-translationally, the C-terminal 5 residues are removed by ATG4 to expose Gly-117 at the C-terminus. This Gly-117 forms then a thioester bond with the 'Cys-558' of ATG7 (E1-like activating enzyme) before being transferred to the 'Cys-258' of ATG3 (the specific E2 conjugating enzyme), in order to be finally amidated with phosphatidylethanolamine. This lipid modification anchors ATG8 to autophagosomes. In terms of tissue distribution, constitutively expressed.

It localises to the cytoplasmic vesicle. The protein resides in the autophagosome membrane. It is found in the vacuole membrane. The protein localises to the cytoplasm. Its subcellular location is the cytoskeleton. Ubiquitin-like modifier involved in autophagosomes formation. May mediate the delivery of the autophagosomes to the vacuole via the microtubule cytoskeleton. This Arabidopsis thaliana (Mouse-ear cress) protein is Autophagy-related protein 8a (ATG8A).